The sequence spans 275 residues: Dermonecrotic toxin LhSicTox-alphaVI1i (275 aa).

Residue His-5 is part of the active site. Mg(2+)-binding residues include Glu-25 and Asp-27. Catalysis depends on His-41, which acts as the Nucleophile. Cystine bridges form between Cys-45-Cys-51 and Cys-47-Cys-192. A Mg(2+)-binding site is contributed by Asp-85.

This sequence belongs to the arthropod phospholipase D family. Class II subfamily. It depends on Mg(2+) as a cofactor. As to expression, expressed by the venom gland.

The protein localises to the secreted. It catalyses the reaction an N-(acyl)-sphingosylphosphocholine = an N-(acyl)-sphingosyl-1,3-cyclic phosphate + choline. The enzyme catalyses an N-(acyl)-sphingosylphosphoethanolamine = an N-(acyl)-sphingosyl-1,3-cyclic phosphate + ethanolamine. The catalysed reaction is a 1-acyl-sn-glycero-3-phosphocholine = a 1-acyl-sn-glycero-2,3-cyclic phosphate + choline. It carries out the reaction a 1-acyl-sn-glycero-3-phosphoethanolamine = a 1-acyl-sn-glycero-2,3-cyclic phosphate + ethanolamine. In terms of biological role, dermonecrotic toxins cleave the phosphodiester linkage between the phosphate and headgroup of certain phospholipids (sphingolipid and lysolipid substrates), forming an alcohol (often choline) and a cyclic phosphate. This toxin acts on sphingomyelin (SM). It may also act on ceramide phosphoethanolamine (CPE), lysophosphatidylcholine (LPC) and lysophosphatidylethanolamine (LPE), but not on lysophosphatidylserine (LPS), and lysophosphatidylglycerol (LPG). It acts by transphosphatidylation, releasing exclusively cyclic phosphate products as second products. Induces dermonecrosis, hemolysis, increased vascular permeability, edema, inflammatory response, and platelet aggregation. This is Dermonecrotic toxin LhSicTox-alphaVI1i from Loxosceles hirsuta (Recluse spider).